Consider the following 746-residue polypeptide: Eukaryotic translation initiation factor 3 subunit B (746 aa).

A compositionally biased stretch (basic and acidic residues) spans 1 to 11; it reads MAPSYEHLREA. Residues 1 to 20 are disordered; the sequence is MAPSYEHLREADLDEDEFDE. In terms of domain architecture, RRM spans 42–128; sequence TFVVIDGLPE…HTLRVNKLMD (87 aa). 7 WD repeats span residues 195 to 234, 247 to 294, 307 to 346, 349 to 386, 458 to 500, 517 to 560, and 575 to 620; these read DRPNWTESFVQWSPLGTYLLSMHMQGVQLWGGPKWDRLGR, PQEN…RSFA, PRKHPWPAFKWSSDDKYVARLTQGQSISVYELPRMNLLDK, IKVEGVQDFEWAPSRPQRDGVKTYEQMFCYWTPEIGSN, TIKD…FFCP, LDKR…EKPE, and ADHY…LREE.

Belongs to the eIF-3 subunit B family. As to quaternary structure, component of the eukaryotic translation initiation factor 3 (eIF-3) complex.

It localises to the cytoplasm. Functionally, RNA-binding component of the eukaryotic translation initiation factor 3 (eIF-3) complex, which is involved in protein synthesis of a specialized repertoire of mRNAs and, together with other initiation factors, stimulates binding of mRNA and methionyl-tRNAi to the 40S ribosome. The eIF-3 complex specifically targets and initiates translation of a subset of mRNAs involved in cell proliferation. The chain is Eukaryotic translation initiation factor 3 subunit B from Pyricularia oryzae (strain 70-15 / ATCC MYA-4617 / FGSC 8958) (Rice blast fungus).